Here is a 322-residue protein sequence, read N- to C-terminus: Packaging protein 3 (322 aa).

The disordered stretch occupies residues M1–L24. An interaction with packaging protein 1 region spans residues M1 to T127.

This sequence belongs to the adenoviridae packaging protein 3 family. As to quaternary structure, part of the genome packaging complex composed of packaging proteins 1, 2 and 3; this complex specifically binds to the packaging sequence on the left end of viral genomic DNA and performs packaging of the viral genome. Interacts with hexon-linking protein IIIa; this interaction is required to promote correct genome packaging. In terms of processing, cleaved at different sites by the viral protease during virion maturation.

It is found in the host nucleus. In terms of biological role, involved in viral genome packaging through its interaction with packaging proteins 1 and 2. After proteolytic cleavage by adenovirus protease, L1 52/55k protein is removed from the capsid during viral maturation. This chain is Packaging protein 3, found in Pantherophis guttatus (Corn snake).